We begin with the raw amino-acid sequence, 517 residues long: GMP synthase [glutamine-hydrolyzing] (517 aa).

The region spanning 11-202 is the Glutamine amidotransferase type-1 domain; sequence KIIVLDFGSQ…AFKVCGAKAN (192 aa). Catalysis depends on Cys88, which acts as the Nucleophile. Residues His176 and Glu178 contribute to the active site. Residues 203 to 392 enclose the GMPS ATP-PPase domain; it reads WTMDDFIEMQ…LGIPHDLVWR (190 aa). Position 230–236 (230–236) interacts with ATP; the sequence is SGGVDSS.

In terms of assembly, homodimer.

It catalyses the reaction XMP + L-glutamine + ATP + H2O = GMP + L-glutamate + AMP + diphosphate + 2 H(+). It functions in the pathway purine metabolism; GMP biosynthesis; GMP from XMP (L-Gln route): step 1/1. In terms of biological role, catalyzes the synthesis of GMP from XMP. The sequence is that of GMP synthase [glutamine-hydrolyzing] from Lactobacillus johnsonii (strain CNCM I-12250 / La1 / NCC 533).